We begin with the raw amino-acid sequence, 484 residues long: UDP-N-acetylmuramoyl-L-alanyl-D-glutamate--2,6-diaminopimelate ligase (484 aa).

Ser30 serves as a coordination point for UDP-N-acetyl-alpha-D-muramoyl-L-alanyl-D-glutamate. 109 to 115 contributes to the ATP binding site; sequence GTNGKTS. UDP-N-acetyl-alpha-D-muramoyl-L-alanyl-D-glutamate contacts are provided by residues 151–152, Ser178, and Arg186; that span reads TT. Lys218 carries the post-translational modification N6-carboxylysine. Residues Arg379, 403–406, Gly455, and Glu459 contribute to the meso-2,6-diaminopimelate site; that span reads DNPR. Positions 403–406 match the Meso-diaminopimelate recognition motif motif; the sequence is DNPR.

It belongs to the MurCDEF family. MurE subfamily. Mg(2+) serves as cofactor. In terms of processing, carboxylation is probably crucial for Mg(2+) binding and, consequently, for the gamma-phosphate positioning of ATP.

Its subcellular location is the cytoplasm. It carries out the reaction UDP-N-acetyl-alpha-D-muramoyl-L-alanyl-D-glutamate + meso-2,6-diaminopimelate + ATP = UDP-N-acetyl-alpha-D-muramoyl-L-alanyl-gamma-D-glutamyl-meso-2,6-diaminopimelate + ADP + phosphate + H(+). It functions in the pathway cell wall biogenesis; peptidoglycan biosynthesis. Functionally, catalyzes the addition of meso-diaminopimelic acid to the nucleotide precursor UDP-N-acetylmuramoyl-L-alanyl-D-glutamate (UMAG) in the biosynthesis of bacterial cell-wall peptidoglycan. The polypeptide is UDP-N-acetylmuramoyl-L-alanyl-D-glutamate--2,6-diaminopimelate ligase (Clostridioides difficile (strain 630) (Peptoclostridium difficile)).